The following is a 421-amino-acid chain: Testin (421 aa).

A PET domain is found at 92–199 (MILTNPVAAK…GDVKLPREMD (108 aa)). Positions 134-164 (KQPVAGSEGAQYRKKQLAKQLPAHDQDPSKC) are disordered. The segment covering 155-164 (PAHDQDPSKC) has biased composition (basic and acidic residues). LIM zinc-binding domains follow at residues 234-297 (YSCY…CDSE), 299-359 (PRCA…NHAV), and 362-421 (QGCH…KMMS).

This sequence belongs to the prickle / espinas / testin family. In terms of assembly, interacts via LIM domain 1 with ZYX. Interacts (via LIM domain 3) with ENAH and VASP. Interacts with ALKBH4, talin, actin, alpha-actinin, GRIP1 and PXN. Interacts (via LIM domain 2) with ACTL7A (via N-terminus). Heterodimer with ACTL7A; the heterodimer interacts with ENAH to form a heterotrimer.

The protein resides in the cytoplasm. The protein localises to the cell junction. It localises to the focal adhesion. Scaffold protein that may play a role in cell adhesion, cell spreading and in the reorganization of the actin cytoskeleton. Plays a role in the regulation of cell proliferation. May act as a tumor suppressor. The chain is Testin (TES) from Rhinolophus ferrumequinum (Greater horseshoe bat).